The primary structure comprises 135 residues: MGLISKIARGLVRGADRMAECTSKQGPNSYNKGRGAKKIGYLTASGKFVKVREMVPVFVVPDLTGFKLKPYVSYKAPPGTEDPMTAKKLFMETVGPQIEKDLQEGTFRPEDLEKYGFEPTQEGKLFKLFPRNYIQ.

The N-terminal 13 residues, 1–13, are a transit peptide targeting the mitochondrion; it reads MGLISKIARGLVR.

The protein belongs to the mitochondrion-specific ribosomal protein mL41 family. In terms of assembly, component of the mitochondrial ribosome large subunit (39S) which comprises a 16S rRNA and about 50 distinct proteins.

The protein localises to the mitochondrion. Component of the mitochondrial ribosome large subunit. Also involved in apoptosis and cell cycle. The sequence is that of Large ribosomal subunit protein mL41A (mrpl41-a) from Xenopus laevis (African clawed frog).